The following is a 116-amino-acid chain: uncharacterized protein (116 aa).

The segment at 1-72 (MCKHVLNAQV…SDEYCPNCDN (72 aa)) adopts a CHY-type zinc-finger fold. Residues Cys-2, His-4, Cys-16, Cys-17, Cys-23, Cys-26, His-27, His-33, Cys-45, Cys-48, Cys-67, and Cys-70 each coordinate Zn(2+).

It localises to the cytoplasm. This is an uncharacterized protein from Schizosaccharomyces pombe (strain 972 / ATCC 24843) (Fission yeast).